A 158-amino-acid polypeptide reads, in one-letter code: NAD(P)H-quinone oxidoreductase subunit J, chloroplastic (158 aa).

It belongs to the complex I 30 kDa subunit family. In terms of assembly, NDH is composed of at least 16 different subunits, 5 of which are encoded in the nucleus.

It localises to the plastid. The protein localises to the chloroplast thylakoid membrane. It carries out the reaction a plastoquinone + NADH + (n+1) H(+)(in) = a plastoquinol + NAD(+) + n H(+)(out). It catalyses the reaction a plastoquinone + NADPH + (n+1) H(+)(in) = a plastoquinol + NADP(+) + n H(+)(out). Functionally, NDH shuttles electrons from NAD(P)H:plastoquinone, via FMN and iron-sulfur (Fe-S) centers, to quinones in the photosynthetic chain and possibly in a chloroplast respiratory chain. The immediate electron acceptor for the enzyme in this species is believed to be plastoquinone. Couples the redox reaction to proton translocation, and thus conserves the redox energy in a proton gradient. This chain is NAD(P)H-quinone oxidoreductase subunit J, chloroplastic, found in Lupinus luteus (European yellow lupine).